Here is a 183-residue protein sequence, read N- to C-terminus: Hypoxanthine-guanine phosphoribosyltransferase (183 aa).

Positions 47 and 48 each coordinate diphosphate. 2 residues coordinate Mg(2+): Glu103 and Asp104. Asp107 (proton acceptor) is an active-site residue. GMP-binding positions include Lys134, 155–156 (FV), and Asp162. Arg168 lines the diphosphate pocket.

This sequence belongs to the purine/pyrimidine phosphoribosyltransferase family. It depends on Mg(2+) as a cofactor.

The protein resides in the cytoplasm. The catalysed reaction is IMP + diphosphate = hypoxanthine + 5-phospho-alpha-D-ribose 1-diphosphate. The enzyme catalyses GMP + diphosphate = guanine + 5-phospho-alpha-D-ribose 1-diphosphate. It participates in purine metabolism; IMP biosynthesis via salvage pathway; IMP from hypoxanthine: step 1/1. It functions in the pathway purine metabolism; GMP biosynthesis via salvage pathway; GMP from guanine: step 1/1. Functionally, purine salvage pathway enzyme that catalyzes the transfer of the ribosyl-5-phosphate group from 5-phospho-alpha-D-ribose 1-diphosphate (PRPP) to the N9 position of the 6-oxopurines hypoxanthine and guanine to form the corresponding ribonucleotides IMP (inosine 5'-monophosphate) and GMP (guanosine 5'-monophosphate), with the release of PPi. This chain is Hypoxanthine-guanine phosphoribosyltransferase (hpt), found in Lactococcus lactis subsp. lactis (strain IL1403) (Streptococcus lactis).